The chain runs to 428 residues: CRISPR system endoribonuclease Csm6 (428 aa).

The tract at residues Met1 to Thr145 is CARF domain. An HEPN domain region spans residues Glu146–Glu428.

The protein belongs to the CRISPR-associated Csm6 family. Homodimer. The composite ssRNase active site is formed at the dimer interface.

With respect to regulation, non-specific ssRNase activity is allosterically activated about 1000-fold by cyclic hexaadenylate (cA6), a second messenger produced by Cas10 of the ternary Csm effector complex in the presence of a cognate target RNA. ssRNase activity is inhibited by physiological concentrations of ATP (1 mM), activity is restored by cOA. CRISPR (clustered regularly interspaced short palindromic repeat) is an adaptive immune system that provides protection against mobile genetic elements (viruses, transposable elements and conjugative plasmids). CRISPR clusters contain spacers, sequences complementary to antecedent mobile elements, and target invading nucleic acids. CRISPR clusters are transcribed and processed into CRISPR RNA (crRNA). The type III-A Csm complex binds crRNA and acts as a crRNA-guided RNase, DNase and cyclic oligoadenylate synthase; binding of target RNA cognate to the crRNA is required for all activities. In a heterologous host this Csm effector complex restricts ssRNA phage MS2, suggesting it may target RNA viruses in vivo. This protein is not part of the Csm complex. Its function is as follows. Csm functions as a non-specific ssDNase. Base-pairing between crRNA and target RNA to form a ternary Csm complex activates a ssDNase activity; target RNA cleavage suppresses the ssDNase, a temporal control that prevents uncontrolled DNA degradation. Viral RNA transcripts probably tether the Csm complex to the viral genome, recruiting Cas10 ssDNA activity which is able to degrade DNA in the transcription bubble, spatially controlling the DNase activity. Functionally, a single-strand-specific endoribonuclease (ssRNase) that is approximately 1000-fold stimulated by cyclic oligoadenylate (cOA); although several species of cOA are synthesized by this organism only cyclic hexaadenylate (cA6) stimulates the ssRNase activity. Cleaves preferentially within GA or AA dinucleotides, although the presence of cA6 broadens the preference. Linear oligoadenylates do not activate the RNase. The sequence is that of CRISPR system endoribonuclease Csm6 from Streptococcus thermophilus.